Consider the following 189-residue polypeptide: Development-specific protein LVN1.2 (189 aa).

As to expression, endoderm cells.

This chain is Development-specific protein LVN1.2, found in Lytechinus variegatus (Green sea urchin).